A 130-amino-acid chain; its full sequence is MADNQYYGTGRRKSSTARVFMKAGNGAITINKRDISEYFGRETARMVVRQPLELVEMLEKFDFNISVVGGGISGQAGAIRHGITRALMVFDETLRGELRKAGFVTRDARKVERKKVGLHKARKKPQFSKR.

Belongs to the universal ribosomal protein uS9 family.

In Colwellia psychrerythraea (strain 34H / ATCC BAA-681) (Vibrio psychroerythus), this protein is Small ribosomal subunit protein uS9.